Here is a 559-residue protein sequence, read N- to C-terminus: Hepatocyte nuclear factor 1-alpha (559 aa).

In terms of domain architecture, HNF-p1 spans Gly-13–Glu-44. A dimerization region spans residues Pro-14–Gly-43. The segment covering Arg-49–Gly-62 has biased composition (basic and acidic residues). The disordered stretch occupies residues Arg-49 to Pro-73. Residues Gln-78–His-173 enclose the POU-specific atypical domain. Interaction with DNA regions lie at residues Gln-121–Glu-123, His-134–Asn-140, Lys-146–Lys-149, Arg-192–Trp-195, Arg-252–Tyr-254, and Asn-259–Lys-262. The short motif at Arg-186–Lys-194 is the Nuclear localization signal element. Positions Gly-188 to His-268 form a DNA-binding region, homeobox; HNF1-type. The segment at Thr-492–Gln-559 is disordered. Residues Asp-499 to Leu-522 are compositionally biased toward polar residues.

The protein belongs to the HNF1 homeobox family. In terms of assembly, binds DNA as a dimer. In terms of tissue distribution, expressed in liver, intestine, spleen and kidney.

The protein localises to the nucleus. In terms of biological role, transcriptional activator that regulates the tissue specific expression of multiple genes, especially in pancreas and liver. Binds to the promoter of the albumin gene. The protein is Hepatocyte nuclear factor 1-alpha (hnf1a) of Salmo salar (Atlantic salmon).